The following is a 111-amino-acid chain: Iron-sulfur cluster assembly protein CyaY (111 aa).

The protein belongs to the frataxin family.

In terms of biological role, involved in iron-sulfur (Fe-S) cluster assembly. May act as a regulator of Fe-S biogenesis. This is Iron-sulfur cluster assembly protein CyaY from Cupriavidus metallidurans (strain ATCC 43123 / DSM 2839 / NBRC 102507 / CH34) (Ralstonia metallidurans).